Reading from the N-terminus, the 214-residue chain is MRVRNKPWAPKLIAAHPELITEDPTQLKGRWQSRFAKPQPLQIEVGSGKGQFIIEMAKRHPEINYVAIEIQTSVIAIILKKLVEAPLPNLQLAHADGQAVTAFFEPHEVDRLYLNFSDPWPKSRHEKRRLTYKSFLSSYREVLKPNGQIEFKTDNRGLFEFSLTSMNNFGMQFEQVWLDLHAVATPEDNVETEYEQKFSAAGPIYKIIATFPAK.

S-adenosyl-L-methionine-binding residues include Glu44, Glu69, Asp96, and Asp118. Asp118 is an active-site residue. Lys122 contributes to the substrate binding site. The tract at residues Arg124–Arg129 is interaction with RNA. Residues Asp154 and Thr192–Glu195 each bind substrate.

It belongs to the class I-like SAM-binding methyltransferase superfamily. TrmB family.

The enzyme catalyses guanosine(46) in tRNA + S-adenosyl-L-methionine = N(7)-methylguanosine(46) in tRNA + S-adenosyl-L-homocysteine. It participates in tRNA modification; N(7)-methylguanine-tRNA biosynthesis. Functionally, catalyzes the formation of N(7)-methylguanine at position 46 (m7G46) in tRNA. In Lactiplantibacillus plantarum (strain ATCC BAA-793 / NCIMB 8826 / WCFS1) (Lactobacillus plantarum), this protein is tRNA (guanine-N(7)-)-methyltransferase.